A 198-amino-acid polypeptide reads, in one-letter code: Eukaryotic translation initiation factor isoform 4E (198 aa).

Positions 1–25 are disordered; the sequence is MATDDVNEPLPAAAELPATEAEKQP. Ala-2 carries the post-translational modification N-acetylalanine. Residues 8–19 are compositionally biased toward low complexity; it reads EPLPAAAELPAT. MRNA-binding positions include 46-47 and 92-93; these read WG and WE. A disulfide bridge links Cys-97 with Cys-138. 145–152 is an mRNA binding site; sequence RPQSKQDK.

The protein belongs to the eukaryotic initiation factor 4E family. EIF4F is a multi-subunit complex, the composition of which varies with external and internal environmental conditions. It is composed of at least EIF4A, EIF4E and EIF4G. EIF4E is also known to interact with other partners. In higher plants two isoforms of EIF4F have been identified, named isoform EIF4F and isoform EIF(iso)4F. Isoform EIF4F has subunits p220 and p26, whereas isoform EIF(iso)4F has subunits p82 and p28. This isoform interacts with the viral protein genome linked (VPg)-proteinase of turnip mosaic potyvirus. Interacts directly with LOX2. Interacts with BTF3. In terms of processing, according to the redox status, the Cys-97-Cys-138 disulfide bridge may have a role in regulating protein function by affecting its ability to bind capped mRNA. As to expression, abundant in floral organs and in young developing tissues.

Its function is as follows. Recognizes and binds the 7-methylguanosine-containing mRNA cap during an early step in the initiation of protein synthesis and facilitates ribosome binding by inducing the unwinding of the mRNAs secondary structures. Mediates susceptibility to Turnipmosaic potyvirus (TuMV) and Tobacco etch potyvirus (TEV). The polypeptide is Eukaryotic translation initiation factor isoform 4E (EIF(ISO)4E) (Arabidopsis thaliana (Mouse-ear cress)).